Reading from the N-terminus, the 578-residue chain is Probable arginine--tRNA ligase, mitochondrial (578 aa).

The transit peptide at 1 to 16 directs the protein to the mitochondrion; sequence MACGFRRAIACQLSRV. L-arginine-binding positions include 133–135, H144, Y322, D326, and Q350; that span reads SPN. The 'HIGH' region motif lies at 133 to 144; the sequence is SPNVAKKFHVGH. K568 bears the N6-acetyllysine mark.

It belongs to the class-I aminoacyl-tRNA synthetase family.

It localises to the mitochondrion membrane. It catalyses the reaction tRNA(Arg) + L-arginine + ATP = L-arginyl-tRNA(Arg) + AMP + diphosphate. Catalyzes the attachment of arginine to tRNA(Arg) in a two-step reaction: arginine is first activated by ATP to form Arg-AMP and then transferred to the acceptor end of tRNA(Arg). The polypeptide is Probable arginine--tRNA ligase, mitochondrial (RARS2) (Pongo abelii (Sumatran orangutan)).